A 189-amino-acid polypeptide reads, in one-letter code: Protein GrpE (189 aa).

Basic and acidic residues predominate over residues methionine 1–serine 38. The segment at methionine 1–glutamine 54 is disordered.

It belongs to the GrpE family. In terms of assembly, homodimer.

The protein resides in the cytoplasm. Its function is as follows. Participates actively in the response to hyperosmotic and heat shock by preventing the aggregation of stress-denatured proteins, in association with DnaK and GrpE. It is the nucleotide exchange factor for DnaK and may function as a thermosensor. Unfolded proteins bind initially to DnaJ; upon interaction with the DnaJ-bound protein, DnaK hydrolyzes its bound ATP, resulting in the formation of a stable complex. GrpE releases ADP from DnaK; ATP binding to DnaK triggers the release of the substrate protein, thus completing the reaction cycle. Several rounds of ATP-dependent interactions between DnaJ, DnaK and GrpE are required for fully efficient folding. In Tropheryma whipplei (strain Twist) (Whipple's bacillus), this protein is Protein GrpE.